Consider the following 251-residue polypeptide: Mycofactocin precursor peptide peptidase (251 aa).

Residues Glu38, His40, Asp49, His128, and Glu167 each contribute to the a divalent metal cation site.

The protein belongs to the creatininase superfamily. Homooctamer. The cofactor is Fe(2+). Zn(2+) serves as cofactor.

It catalyses the reaction [mycofactocin precursor peptide]-C-terminal glycyl-N-{5-[(4-hydroxyphenyl)methyl]-4,4-dimethyl-2-oxopyrrolidin-3-yl}acetamide + H2O = [mycofactocin precursor peptide]-C-terminal glycine + 3-amino-5-[(4-hydroxyphenyl)methyl]-4,4-dimethyl-2-pyrrolidin-2-one. Its function is as follows. Peptidase involved in the biosynthesis of the enzyme cofactor mycofactocin (MFT). Catalyzes cleavage of the MftC-modified MftA peptide to liberate its final two residues, which consist of a cross-linked valine-decarboxylated tyrosine dipeptide (named 3-amino-5-[(4-hydroxyphenyl)methyl]-4,4-dimethyl-2-pyrrolidin-2-one or ADHP). This Mycobacterium tuberculosis (strain CDC 1551 / Oshkosh) protein is Mycofactocin precursor peptide peptidase (mftE).